The following is a 190-amino-acid chain: Bifunctional D-Ala-D-Ala dipeptidase and D-Ala-D-Ala carboxypeptidase VanXYC (190 aa).

E66 is a binding site for Mg(2+). 5 residues coordinate a dipeptide: Q67, A88, S93, H95, and D102. H95 and D102 together coordinate Cu(2+). Residues H95 and D102 each contribute to the Zn(2+) site. The catalytic acid/base residue role is filled by E153. Positions 155 and 156 each coordinate a dipeptide. H156 is a Cu(2+) binding site. H156 contacts Zn(2+).

It belongs to the peptidase M15D family. Homodimer.

It localises to the cytoplasm. It carries out the reaction D-alanyl-D-alanine + H2O = 2 D-alanine. The catalysed reaction is UDP-N-acetyl-alpha-D-muramoyl-L-alanyl-gamma-D-glutamyl-L-lysyl-D-alanyl-D-alanine + H2O = UDP-N-acetyl-alpha-D-muramoyl-L-alanyl-gamma-D-glutamyl-L-lysyl-D-alanine + D-alanine. Functionally, bifunctional enzyme, exhibiting dipeptidase and carboxypeptidase activities. Catalyzes hydrolysis of the D-alanyl-D-alanine dipeptide. Cleaves the C-terminal D-alanine residue of UDP-muramyl-pentapeptide[Ala] (UDP-MurNAc-L-Ala-D-Glu-L-Lys-D-Ala-D-Ala). Shows no activity against the pentapeptide with a C-terminal D-serine residue. Together with VanC/VanC1 and VanT, required for vancomycin resistance in E.gallinarum strain BM4174. The polypeptide is Bifunctional D-Ala-D-Ala dipeptidase and D-Ala-D-Ala carboxypeptidase VanXYC (Enterococcus gallinarum).